The primary structure comprises 411 residues: MADVVVGIQWGDEGKGKIVDRIAKDYDFVVRYQGGHNAGHTIVHKGVKHSLHLMPSGVLYPKCKNIISSAVVVSVKDLCEEISAFEDLENRLFVSDRAHVILPYHAKKDAFKEKSQNIGTTKKGIGPCYEDKMARSGIRMGDLLDDKILEEKLNAHFKAIEPFKKAYDLGENYEKDLMGYFKTYAPKICPFIKDTTSMLIEANQKGEKILLEGAQGTLLDIDLGTYPFVTSSNTTSASACVSTGLNPKAINEVIGITKAYSTRVGNGPFPSEDTTPMGDHLRTKGAEFGTTTKRPRRCGWLDLVALKYACALNGCTQLALMKLDVLDGIDAIKVCVAYERKGERLEIFPSDLKDCVPIYQTFKGWEKSVGVRKLDDLEPNVREYIRFIEKEVGVKIRLISTSPEREDTIFL.

Residues 11-17 and 39-41 each bind GTP; these read GDEGKGK and GHT. The Proton acceptor role is filled by D12. D12 and G39 together coordinate Mg(2+). IMP-binding positions include 12–15, 37–40, T121, R135, Q215, T230, and R294; these read DEGK and NAGH. Catalysis depends on H40, which acts as the Proton donor. Residue 290 to 296 coordinates substrate; it reads TTTKRPR. GTP is bound by residues R296, 322-324, and 400-402; these read KLD and STS.

Belongs to the adenylosuccinate synthetase family. In terms of assembly, homodimer. Requires Mg(2+) as cofactor.

It localises to the cytoplasm. It carries out the reaction IMP + L-aspartate + GTP = N(6)-(1,2-dicarboxyethyl)-AMP + GDP + phosphate + 2 H(+). The protein operates within purine metabolism; AMP biosynthesis via de novo pathway; AMP from IMP: step 1/2. Functionally, plays an important role in the de novo pathway of purine nucleotide biosynthesis. Catalyzes the first committed step in the biosynthesis of AMP from IMP. The chain is Adenylosuccinate synthetase from Helicobacter pylori (strain ATCC 700392 / 26695) (Campylobacter pylori).